The following is a 258-amino-acid chain: UPF0246 protein YaaA (258 aa).

It belongs to the UPF0246 family.

This is UPF0246 protein YaaA from Escherichia coli O157:H7.